A 383-amino-acid chain; its full sequence is uncharacterized protein (383 aa).

Disordered stretches follow at residues 1-30 (MDLC…PTCT), 114-144 (ETKP…STAS), 262-289 (GEKR…ARTS), and 341-360 (AKDP…NSPQ). Acidic residues predominate over residues 10 to 26 (DLENGENNEIQSTEETE). Residues 128-141 (SSPSQTQAAPQGPS) show a composition bias toward low complexity. Basic and acidic residues predominate over residues 262-271 (GEKRPSELAK).

This is an uncharacterized protein from Macaca fascicularis (Crab-eating macaque).